A 282-amino-acid chain; its full sequence is Bis(5'-nucleosyl)-tetraphosphatase, symmetrical (282 aa).

It belongs to the Ap4A hydrolase family. As to quaternary structure, monomer.

The catalysed reaction is P(1),P(4)-bis(5'-adenosyl) tetraphosphate + H2O = 2 ADP + 2 H(+). In terms of biological role, hydrolyzes diadenosine 5',5'''-P1,P4-tetraphosphate to yield ADP. The sequence is that of Bis(5'-nucleosyl)-tetraphosphatase, symmetrical from Escherichia coli O157:H7.